The following is a 621-amino-acid chain: TOX high mobility group box family member 4 (621 aa).

Disordered regions lie at residues 153–227 and 305–333; these read LGLS…QKPV and LDPA…ASIE. T176 is modified (phosphothreonine). S178, S181, and S182 each carry phosphoserine. A compositionally biased stretch (basic and acidic residues) spans 183–193; it reads LHEDGVEDFRR. Over residues 208 to 218 the composition is skewed to basic residues; sequence KQKAPKKRKKK. The short motif at 213–218 is the Nuclear localization signal element; it reads KKRKKK. Positions 223–291 form a DNA-binding region, HMG box; sequence PQKPVSAYAL…EYLKALAAYK (69 aa). Positions 307 to 319 are enriched in pro residues; that stretch reads PAPPSQTPSPPPM. Residue T313 is modified to Phosphothreonine. S315 carries the phosphoserine modification. Residues 320–333 show a composition bias toward low complexity; sequence ATVDPASPAPASIE. Position 481 is an asymmetric dimethylarginine (R481). The tract at residues 510–529 is disordered; that stretch reads PTVESSPERPMNNSPEAHTV. Phosphoserine is present on residues S533, S550, S552, S560, S562, and S567.

In terms of assembly, component of the PNUTS-PP1 phosphatase complex, composed of PPP1R10/PNUTS, TOX4, WDR82 and PPP1CA or PPP1CB or PPP1CC. Interacts with PPP1R10/PNUTS. Interacts with FOXO1 and CREB1 (increased by cAMP); FOXO1 and CREB1 are required for full induction of TOX4-dependent activity and the interactions are inhibited by insulin.

The protein resides in the nucleus. Its subcellular location is the chromosome. In liver, recruited to target gene promoters following treatment with dexamethasone and cAMP. Binding is decreased in presence of insulin. In terms of biological role, transcription factor that modulates cell fate reprogramming from the somatic state to the pluripotent and neuronal fate. In liver, controls the expression of hormone-regulated gluconeogenic genes such as G6PC1 and PCK1. This regulation is independent of the insulin receptor activation. Also acts as a regulatory component of protein phosphatase 1 (PP1) complexes. Component of the PNUTS-PP1 protein phosphatase complex, a PP1 complex that regulates RNA polymerase II transcription pause-release. PNUTS-PP1 also plays a role in the control of chromatin structure and cell cycle progression during the transition from mitosis into interphase. This is TOX high mobility group box family member 4 (TOX4) from Pongo abelii (Sumatran orangutan).